Consider the following 93-residue polypeptide: uncharacterized protein (93 aa).

It to E.coli YdbD C-terminal region.

This is an uncharacterized protein from Escherichia coli (strain K12).